The primary structure comprises 393 residues: Methylthioribose kinase (393 aa).

ATP is bound by residues asparagine 38, lysine 53, and 107-109 (EDL). Aspartate 225 serves as a coordination point for substrate. 242–244 (DPE) contributes to the ATP binding site. Arginine 332 is a binding site for substrate.

The protein belongs to the methylthioribose kinase family. As to quaternary structure, homodimer.

It carries out the reaction 5-(methylsulfanyl)-D-ribose + ATP = 5-(methylsulfanyl)-alpha-D-ribose 1-phosphate + ADP + H(+). Its pathway is amino-acid biosynthesis; L-methionine biosynthesis via salvage pathway; S-methyl-5-thio-alpha-D-ribose 1-phosphate from S-methyl-5'-thioadenosine (hydrolase route): step 2/2. Its function is as follows. Catalyzes the phosphorylation of methylthioribose into methylthioribose-1-phosphate. This is Methylthioribose kinase from Bacillus cereus (strain AH820).